A 249-amino-acid chain; its full sequence is Ubiquinone biosynthesis O-methyltransferase (249 aa).

The interval 1-23 (MTSPSQVLPASAGKPTGPNADPK) is disordered. S-adenosyl-L-methionine-binding residues include R52, G71, D92, and M136.

This sequence belongs to the methyltransferase superfamily. UbiG/COQ3 family.

The enzyme catalyses a 3-demethylubiquinol + S-adenosyl-L-methionine = a ubiquinol + S-adenosyl-L-homocysteine + H(+). It carries out the reaction a 3-(all-trans-polyprenyl)benzene-1,2-diol + S-adenosyl-L-methionine = a 2-methoxy-6-(all-trans-polyprenyl)phenol + S-adenosyl-L-homocysteine + H(+). It participates in cofactor biosynthesis; ubiquinone biosynthesis. In terms of biological role, O-methyltransferase that catalyzes the 2 O-methylation steps in the ubiquinone biosynthetic pathway. The sequence is that of Ubiquinone biosynthesis O-methyltransferase from Cupriavidus pinatubonensis (strain JMP 134 / LMG 1197) (Cupriavidus necator (strain JMP 134)).